The sequence spans 134 residues: Transcription factor atoh7 (134 aa).

The segment at 1-27 (MKPRRPSCADSGSDSDSRDPEKFESAM) is disordered. Positions 15 to 27 (SDSRDPEKFESAM) are enriched in basic and acidic residues. The bHLH domain occupies 28–80 (RRRMAANARERKRMQGLNTAFDRLRKVVPQWGQDKKLSKYETLQMALSYIMAL).

Its subcellular location is the nucleus. The protein resides in the perikaryon. It is found in the cell projection. It localises to the axon. Its function is as follows. Transcription factor that binds to DNA at the consensus sequence 5'-CAG[GC]TG-3'. Involved in the differentiation of retinal ganglion cells, photoreceptor population and optic nerve development. Required for retinal circadian rhythm photoentrainment. This is Transcription factor atoh7 from Danio rerio (Zebrafish).